Here is a 563-residue protein sequence, read N- to C-terminus: Src substrate protein p85 (563 aa).

Cortactin repeat units lie at residues 89-125 (ASHG…SQVD), 126-162 (SVKG…SQKD), 163-199 (YSSG…SQKD), 200-236 (YSKG…SQKD), 237-273 (YVKG…SQKD), and 274-310 (YKSG…SQQD). Residues 311–333 (YSKGFGGKYGVQKDRMDKNAATF) form a Cortactin 7; truncated repeat. The tract at residues 331–477 (ATFEDIEKPT…EAVSQREAEY (147 aa)) is disordered. Residues 349 to 410 (VERVANKTSS…EEQAKAKKQT (62 aa)) are a coiled coil. Residues 366 to 405 (LAKEKEQEDRRKAEAERAQRMAREKQEQEEARRKLEEQAK) show a composition bias toward basic and acidic residues. One can recognise an SH3 domain in the interval 505–563 (ELGITAIALYDYQAAGDDEISFDPDDIITNIEMIDDGWWRGVCKGRYGLFPANYVELRQ).

In terms of processing, acetylated. In normal cells, appears to be phosphorylated on serine and threonine; in cells expressing activated forms of pp60-src, they become heavily phosphorylated on tyrosine in vitro. Tyrosine phosphorylation in transformed cells may contribute to cellular growth regulation and transformation.

It localises to the cytoplasm. Its subcellular location is the cytoskeleton. It is found in the cell projection. The protein localises to the lamellipodium. The protein resides in the ruffle. It localises to the dendrite. Its subcellular location is the cell membrane. It is found in the podosome. The protein localises to the cell junction. The protein resides in the focal adhesion. It localises to the membrane. Its subcellular location is the clathrin-coated pit. It is found in the dendritic spine. The protein localises to the cell cortex. The protein resides in the endoplasmic reticulum. Functionally, contributes to the organization of the actin cytoskeleton and cell shape. Plays a role in the formation of lamellipodia and in cell migration. Plays a role in the regulation of neuron morphology, axon growth and formation of neuronal growth cones, and may play a role in the regulation of neuronal spine density. Plays a role in focal adhesion assembly and turnover. Plays a role in intracellular protein transport and endocytosis, and in modulating the levels of potassium channels present at the cell membrane. Plays a role in endocytosis via clathrin-coated pits. This is Src substrate protein p85 (CTTN1) from Gallus gallus (Chicken).